Here is a 242-residue protein sequence, read N- to C-terminus: ATP synthase subunit a (242 aa).

The next 5 helical transmembrane spans lie at 21-41 (LSSI…AIIC), 83-103 (AVTL…FSIV), 117-137 (DATV…FYGI), 175-195 (LYGN…LFFN), and 198-218 (AWGW…SIFV).

Belongs to the ATPase A chain family. As to quaternary structure, F-type ATPases have 2 components, CF(1) - the catalytic core - and CF(0) - the membrane proton channel. CF(1) has five subunits: alpha(3), beta(3), gamma(1), delta(1), epsilon(1). CF(0) has three main subunits: a(1), b(2) and c(9-12). The alpha and beta chains form an alternating ring which encloses part of the gamma chain. CF(1) is attached to CF(0) by a central stalk formed by the gamma and epsilon chains, while a peripheral stalk is formed by the delta and b chains.

It is found in the cell membrane. Its function is as follows. Key component of the proton channel; it plays a direct role in the translocation of protons across the membrane. This chain is ATP synthase subunit a, found in Staphylococcus aureus (strain Newman).